The following is a 199-amino-acid chain: Large ribosomal subunit protein bL25 (199 aa).

Belongs to the bacterial ribosomal protein bL25 family. CTC subfamily. In terms of assembly, part of the 50S ribosomal subunit; part of the 5S rRNA/L5/L18/L25 subcomplex. Contacts the 5S rRNA. Binds to the 5S rRNA independently of L5 and L18.

In terms of biological role, this is one of the proteins that binds to the 5S RNA in the ribosome where it forms part of the central protuberance. This is Large ribosomal subunit protein bL25 from Caldanaerobacter subterraneus subsp. tengcongensis (strain DSM 15242 / JCM 11007 / NBRC 100824 / MB4) (Thermoanaerobacter tengcongensis).